The sequence spans 265 residues: uncharacterized protein (265 aa).

CBS domains follow at residues 9–64 (MTKK…EKVE) and 67–126 (MTKR…TTPK).

This is an uncharacterized protein from Methanocaldococcus jannaschii (strain ATCC 43067 / DSM 2661 / JAL-1 / JCM 10045 / NBRC 100440) (Methanococcus jannaschii).